A 583-amino-acid chain; its full sequence is DNA ligase (583 aa).

Glutamate 249 provides a ligand contact to ATP. Residue lysine 251 is the N6-AMP-lysine intermediate of the active site. Residues arginine 256, arginine 271, glutamate 301, phenylalanine 341, arginine 416, and lysine 422 each contribute to the ATP site.

The protein belongs to the ATP-dependent DNA ligase family. It depends on Mg(2+) as a cofactor.

It catalyses the reaction ATP + (deoxyribonucleotide)n-3'-hydroxyl + 5'-phospho-(deoxyribonucleotide)m = (deoxyribonucleotide)n+m + AMP + diphosphate.. Functionally, DNA ligase that seals nicks in double-stranded DNA during DNA replication, DNA recombination and DNA repair. The protein is DNA ligase of Pyrobaculum calidifontis (strain DSM 21063 / JCM 11548 / VA1).